Reading from the N-terminus, the 259-residue chain is Isoprenyl transferase (259 aa).

Aspartate 30 is a catalytic residue. A Mg(2+)-binding site is contributed by aspartate 30. Substrate contacts are provided by residues 31–34 (GNGR), tryptophan 35, arginine 43, histidine 47, and 75–77 (STE). The active-site Proton acceptor is the asparagine 78. Residues tryptophan 79, arginine 81, arginine 198, and 204-206 (RIS) contribute to the substrate site. Glutamate 217 provides a ligand contact to Mg(2+).

Belongs to the UPP synthase family. As to quaternary structure, homodimer. Mg(2+) is required as a cofactor.

Its function is as follows. Catalyzes the condensation of isopentenyl diphosphate (IPP) with allylic pyrophosphates generating different type of terpenoids. This is Isoprenyl transferase from Caulobacter vibrioides (strain ATCC 19089 / CIP 103742 / CB 15) (Caulobacter crescentus).